Here is a 201-residue protein sequence, read N- to C-terminus: Small ribosomal subunit protein uS4c (201 aa).

The interval 15-43 is disordered; sequence LGALPGLTSKRPRPGSDLRNQSRSGKRSQ. The region spanning 89–150 is the S4 RNA-binding domain; sequence MRLDNILFRL…EQRSRALIQN (62 aa).

This sequence belongs to the universal ribosomal protein uS4 family. Part of the 30S ribosomal subunit. Contacts protein S5. The interaction surface between S4 and S5 is involved in control of translational fidelity.

The protein localises to the plastid. The protein resides in the chloroplast. One of the primary rRNA binding proteins, it binds directly to 16S rRNA where it nucleates assembly of the body of the 30S subunit. Functionally, with S5 and S12 plays an important role in translational accuracy. This is Small ribosomal subunit protein uS4c (rps4) from Liriodendron tulipifera (Tuliptree).